Here is a 104-residue protein sequence, read N- to C-terminus: Circadian clock oscillator protein KaiB (104 aa).

This sequence belongs to the KaiB family. The KaiABC complex composition changes during the circadian cycle to control KaiC phosphorylation. Complexes KaiC(6), KaiA(2-4):KaiC(6), KaiB(6):KaiC(6) and KaiC(6):KaiB(6):KaiA(12) are among the most important forms, many form cooperatively. Undergoes a major conformational rearrangment; in the free state forms homotetramers as a dimer of dimers. When bound to the CI domain of KaiC switches to a monomeric thioredoxin-fold (KaiB(fs)). KaiB(fs) binds CikA, leading it to dephosphorylate phospho-RpaA.

Key component of the KaiABC oscillator complex, which constitutes the main circadian regulator in cyanobacteria. Complex composition changes during the circadian cycle to control KaiC phosphorylation. KaiA stimulates KaiC autophosphorylation, while KaiB sequesters KaiA, leading to KaiC autodephosphorylation. Phospho-Ser-431 KaiC accumulation triggers binding of KaiB to form the KaiB(6):KaiC(6) complex, leading to changes in output regulators CikA and SasA. KaiB switches to a thioredoxin-like fold (KaiB(fs)) when bound to KaiC. KaiB(6):KaiC(6) formation exposes a site for KaiA binding that sequesters KaiA from KaiC, making the KaiC(6):KaiB(6):KaiA(12) complex that results in KaiC autodephosphorylation. Its function is as follows. A metamorphic protein which reversibly switches between an inactive tetrameric fold and a rare, thioredoxin-like monomeric fold (KaiB(fs)). KaiB(fs) binds phospho-KaiC, KaiA and CikA. KaiA and CikA compete for binding to KaiB(fs), and KaiB(fs) and SasA compete for binding to KaiC, thus the clock oscillator and output signal pathway are tightly coupled. In Nostoc punctiforme (strain ATCC 29133 / PCC 73102), this protein is Circadian clock oscillator protein KaiB.